The following is an 862-amino-acid chain: Taxadiene synthase (862 aa).

The Mg(2+) site is built by aspartate 613, aspartate 617, asparagine 757, threonine 761, and glutamate 765. The short motif at 613-617 is the DDXXD motif element; the sequence is DDMAD.

The protein belongs to the terpene synthase family. Mg(2+) is required as a cofactor.

The enzyme catalyses (2E,6E,10E)-geranylgeranyl diphosphate = taxa-4(5),11(12)-diene + diphosphate. The protein operates within alkaloid biosynthesis; taxol biosynthesis; taxa-4(20),11-dien-5alpha-ol from geranylgeranyl diphosphate: step 1/2. Functionally, catalyzes the cyclization of the ubiquitous isoprenoid intermediate geranylgeranyl diphosphate to taxa-4,11-diene, the parent olefin with a taxane skeleton. This is Taxadiene synthase (TDC1) from Taxus baccata (English yew).